Here is a 719-residue protein sequence, read N- to C-terminus: DNA replication licensing factor MCM7 (719 aa).

A2 bears the N-acetylalanine mark. Glycyl lysine isopeptide (Lys-Gly) (interchain with G-Cter in SUMO2) cross-links involve residues K15 and K28. S121 and S314 each carry phosphoserine. Positions 332–538 constitute an MCM domain; sequence FYEKLAASIA…NDLRLAQHIT (207 aa). Residue Y345 participates in ATP binding. S365 bears the Phosphoserine mark. ATP-binding residues include G384, A386, K387, S388, and N489. S500 carries the phosphoserine modification. An Arginine finger motif is present at residues 513–516; that stretch reads SRFD. ATP is bound at residue R514. The interaction with RAD17 stretch occupies residues 521 to 564; sequence IQDRPDRDNDLRLAQHITYVHQHSRQPPAQFEPLDMKLMRRYIA. Positions 577-719 are interaction with ATRIP; the sequence is LADYITAAYV…NTARTRITFV (143 aa). ATP is bound at residue R604. Phosphoserine is present on S678.

It belongs to the MCM family. As to quaternary structure, component of the MCM2-7 complex. The complex forms a toroidal hexameric ring with the proposed subunit order MCM2-MCM6-MCM4-MCM7-MCM3-MCM5. Component of the CMG helicase complex, a hexameric ring of related MCM2-7 subunits stabilized by CDC45 and the tetrameric GINS complex. Interacts with the ATR-ATRIP complex and with RAD17. Interacts with TIPIN. Interacts with MCMBP. Interacts with ANKRD17. Component of the replisome complex composed of at least DONSON, MCM2, MCM7, PCNA and TICRR. O-glycosylated (O-GlcNAcylated), in a cell cycle-dependent manner. Post-translationally, ubiquitinated by ECS(LRR1) E3 ubiquitin-protein ligase complex when forks converge following formation of DNA interstrand cross-links. During mitosis, ubiquitinated by TRAIP when forks converge following formation of DNA interstrand cross-links. Short ubiquitin chains on MCM7 promote recruitment of DNA glycosylase NEIL3. If the interstrand cross-link cannot be cleaved by NEIL3, the ubiquitin chains continue to grow on MCM7, promoting the unloading of the CMG helicase complex by the VCP/p97 ATPase.

Its subcellular location is the nucleus. The protein resides in the chromosome. The enzyme catalyses ATP + H2O = ADP + phosphate + H(+). Functionally, acts as a component of the MCM2-7 complex (MCM complex) which is the replicative helicase essential for 'once per cell cycle' DNA replication initiation and elongation in eukaryotic cells. Core component of CDC45-MCM-GINS (CMG) helicase, the molecular machine that unwinds template DNA during replication, and around which the replisome is built. The active ATPase sites in the MCM2-7 ring are formed through the interaction surfaces of two neighboring subunits such that a critical structure of a conserved arginine finger motif is provided in trans relative to the ATP-binding site of the Walker A box of the adjacent subunit. The six ATPase active sites, however, are likely to contribute differentially to the complex helicase activity. Required for S-phase checkpoint activation upon UV-induced damage. The protein is DNA replication licensing factor MCM7 (MCM7) of Bos taurus (Bovine).